The primary structure comprises 277 residues: MTNTQTEIINELKVSPAIDVAKEVEFRVQFLVDYLRASHTKGFVLGISGGQDSTLAGRLTQLAVERIRAEENSTDYVFYAVRLPYAIQADEDDAQVALEFIAPDKSVTVNVKDATDATEATVAAALELPELTDFNRGNIKARQRMVAQYAIAGQLGLLVIGTDHAAENVTGFFTKFGDGAADLLPLAGLSKRQGAAILEHLGAPSSTWTKVPTADLEEDRPALPDEEALGVSYADIDNYLENKPDVSEKAQQRIEHLWKVGQHKRHLPATPQENWWR.

46–53 (GISGGQDS) is an ATP binding site. Position 52 (Asp52) interacts with Mg(2+). A deamido-NAD(+)-binding site is contributed by Arg142. Thr162 contacts ATP. Mg(2+) is bound at residue Glu167. The deamido-NAD(+) site is built by Lys175 and Asp182. Positions 191 and 213 each coordinate ATP. 263-264 (HK) lines the deamido-NAD(+) pocket.

It belongs to the NAD synthetase family. In terms of assembly, homodimer.

It carries out the reaction deamido-NAD(+) + NH4(+) + ATP = AMP + diphosphate + NAD(+) + H(+). It participates in cofactor biosynthesis; NAD(+) biosynthesis; NAD(+) from deamido-NAD(+) (ammonia route): step 1/1. Functionally, catalyzes the ATP-dependent amidation of deamido-NAD to form NAD. Uses ammonia as a nitrogen source. This is NH(3)-dependent NAD(+) synthetase from Corynebacterium glutamicum (strain ATCC 13032 / DSM 20300 / JCM 1318 / BCRC 11384 / CCUG 27702 / LMG 3730 / NBRC 12168 / NCIMB 10025 / NRRL B-2784 / 534).